The primary structure comprises 354 residues: Uroporphyrinogen decarboxylase (354 aa).

Substrate is bound by residues 27–31, Asp77, Tyr154, Thr209, and His327; that span reads RQAGR.

It belongs to the uroporphyrinogen decarboxylase family. Homodimer.

The protein localises to the cytoplasm. The enzyme catalyses uroporphyrinogen III + 4 H(+) = coproporphyrinogen III + 4 CO2. The protein operates within porphyrin-containing compound metabolism; protoporphyrin-IX biosynthesis; coproporphyrinogen-III from 5-aminolevulinate: step 4/4. Its function is as follows. Catalyzes the decarboxylation of four acetate groups of uroporphyrinogen-III to yield coproporphyrinogen-III. The sequence is that of Uroporphyrinogen decarboxylase from Cronobacter sakazakii (strain ATCC BAA-894) (Enterobacter sakazakii).